A 323-amino-acid polypeptide reads, in one-letter code: rRNA 2'-O-methyltransferase fibrillarin (323 aa).

The tract at residues 1–78 is disordered; the sequence is MRPGFSPRGG…GGGRGGFGGG (78 aa). 2 stretches are compositionally biased toward gly residues: residues 7–44 and 63–78; these read PRGG…GGRG and GRGG…FGGG. Asymmetric dimethylarginine occurs at positions 8, 17, 23, and 29. Residues 174–175, 193–194, 218–219, and 238–241 each bind S-adenosyl-L-methionine; these read TT, EF, DA, and DVAQ. Residues 276–308 are helical; sequence APEAVFAAEVKKMQQENMKPQEQLTLEPYERDH.

The protein belongs to the methyltransferase superfamily. Fibrillarin family. In terms of assembly, component of box C/D small nucleolar ribonucleoprotein (snoRNP) particles. Part of the small subunit (SSU) processome, composed of more than 70 proteins and the RNA chaperone small nucleolar RNA (snoRNA) U3. Post-translationally, by homology to other fibrillarins, some or all of the N-terminal domain arginines are modified to asymmetric dimethylarginine (DMA).

Its subcellular location is the nucleus. It is found in the nucleolus. The protein localises to the nucleoplasm. The catalysed reaction is L-glutaminyl-[histone H2A] + S-adenosyl-L-methionine = N(5)-methyl-L-glutaminyl-[histone H2A] + S-adenosyl-L-homocysteine + H(+). It catalyses the reaction a ribonucleotide in rRNA + S-adenosyl-L-methionine = a 2'-O-methylribonucleotide in rRNA + S-adenosyl-L-homocysteine + H(+). The enzyme catalyses a ribonucleotide in U6 snRNA + S-adenosyl-L-methionine = a 2'-O-methylribonucleotide in U6 snRNA + S-adenosyl-L-homocysteine + H(+). Its function is as follows. S-adenosyl-L-methionine-dependent methyltransferase that has the ability to methylate both RNAs and proteins. Involved in pre-rRNA processing by catalyzing the site-specific 2'-hydroxyl methylation of ribose moieties in pre-ribosomal RNA. Probably catalyzes 2'-O-methylation of U6 snRNAs in box C/D RNP complexes. U6 snRNA 2'-O-methylation is required for mRNA splicing fidelity. Also acts as a protein methyltransferase by mediating methylation of 'Gln-105' of histone H2A (H2AQ104me), a modification that impairs binding of the FACT complex and is specifically present at 35S ribosomal DNA locus. Part of the small subunit (SSU) processome, first precursor of the small eukaryotic ribosomal subunit. During the assembly of the SSU processome in the nucleolus, many ribosome biogenesis factors, an RNA chaperone and ribosomal proteins associate with the nascent pre-rRNA and work in concert to generate RNA folding, modifications, rearrangements and cleavage as well as targeted degradation of pre-ribosomal RNA by the RNA exosome. This Xenopus laevis (African clawed frog) protein is rRNA 2'-O-methyltransferase fibrillarin (fbl).